A 993-amino-acid chain; its full sequence is Desmoglein-3 (993 aa).

An N-terminal signal peptide occupies residues 1–23 (MTCLFPRALGSLALLMVVLLVQG). Residues 24 to 49 (ELHVKPGGQHREDGTALQLAKRRYKR) constitute a propeptide that is removed on maturation. 4 consecutive Cadherin domains span residues 50 to 157 (EWVK…PPIF), 158 to 267 (SQTI…FPVL), 268 to 388 (RESQ…PPSK), and 384 to 495 (RPPS…CPSV). At 50–617 (EWVKFAKPCR…YGESSWRLGP (568 aa)) the chain is on the extracellular side. Residues Asn110 and Asn180 are each glycosylated (N-linked (GlcNAc...) asparagine). Residues Asn459 and Asn546 are each glycosylated (N-linked (GlcNAc...) asparagine). A helical membrane pass occupies residues 618–638 (AAIGLILLGLLMLLLAPLLLL). Residues 639-993 (TCDCGSGPIG…LYTKETCSHL (355 aa)) are Cytoplasmic-facing. Residues 641–714 (DCGSGPIGGA…NTYAGGTMVE (74 aa)) form a required for interaction with CTNND1 and localization at cell-cell junctions region. The disordered stretch occupies residues 845–876 (AKQAKPGPKDSGSGADTCARSMEVPQSGSNRY). Desmoglein repeat repeat units follow at residues 905-930 (MSTSGSVHPAVAIPDPLQLGNYLLTE) and 931-961 (TYSTSGSFAQPTTVTFDPHVTQNVTVTERVI).

Homodimer. Part of a complex that contains DSG3, PKP1, YAP1 and YWHAG; the complex is required for localization of DSG3 and YAP1 to the cell membrane in keratinocytes. Interacts with PKP2. Interacts with CTNND1; the interaction facilitates DSG3 localization and retention at cell-cell junctions. Interacts with CDH1; the interaction is required for CDH1 localization to developing adherens junctions. Interacts with RAC1; the interaction is required for DSG3 translocation to cell-cell junctions, organization of cortical F-actin bundles and actin anchoring at cell-cell junctions. Interacts with DSC3; the interaction may limit the interaction of DSC3 with p38MAPK family members and therefore repress p38MAPK signaling activation. In terms of tissue distribution, expressed in the basal layer of the outer root sheath of the telogen hair club, specifically at the cell membrane between the apex of the cells and the surrounding hair club (at protein level). Expression is less abundant between the lateral margins of the outer root sheath basal cells (at protein level). Expressed in epidermis. Expressed in the epithelium of the tongue.

It localises to the cell membrane. It is found in the cell junction. The protein resides in the desmosome. The protein localises to the cytoplasm. Its subcellular location is the tight junction. Functionally, a component of desmosome cell-cell junctions which are required for positive regulation of cellular adhesion. Required for adherens and desmosome junction assembly in response to mechanical force in keratinocytes. Required for desmosome-mediated cell-cell adhesion of cells surrounding the telogen hair club and the basal layer of the outer root sheath epithelium, consequently is essential for the anchoring of telogen hairs in the hair follicle. Required for the maintenance of the epithelial barrier via promoting desmosome-mediated intercellular attachment of suprabasal epithelium to basal cells. May play a role in the protein stability of the desmosome plaque components DSP, JUP, PKP1, PKP2 and PKP3. Required for YAP1 localization at the plasma membrane in keratinocytes in response to mechanical strain, via the formation of an interaction complex composed of DSG3, PKP1 and YWHAG. May also be involved in the positive regulation of YAP1 target gene transcription and as a result cell proliferation. Positively regulates cellular contractility and cell junction formation via organization of cortical F-actin bundles and anchoring of actin to tight junctions, in conjunction with RAC1. The cytoplasmic pool of DSG3 is required for the localization of CDH1 and CTNNB1 at developing adherens junctions, potentially via modulation of SRC activity. Inhibits keratinocyte migration via suppression of p38MAPK signaling, may therefore play a role in moderating wound healing. In Mus musculus (Mouse), this protein is Desmoglein-3 (Dsg3).